A 427-amino-acid chain; its full sequence is Diaminobutyrate--2-oxoglutarate transaminase (427 aa).

The residue at position 269 (Lys-269) is an N6-(pyridoxal phosphate)lysine.

The protein belongs to the class-III pyridoxal-phosphate-dependent aminotransferase family. Pyridoxal 5'-phosphate serves as cofactor.

It carries out the reaction L-2,4-diaminobutanoate + 2-oxoglutarate = L-aspartate 4-semialdehyde + L-glutamate. Its pathway is amine and polyamine biosynthesis; ectoine biosynthesis; L-ectoine from L-aspartate 4-semialdehyde: step 1/3. Functionally, catalyzes reversively the conversion of L-aspartate beta-semialdehyde (ASA) to L-2,4-diaminobutyrate (DABA) by transamination with L-glutamate. The chain is Diaminobutyrate--2-oxoglutarate transaminase (ectB) from Marinococcus halophilus.